The primary structure comprises 282 residues: CD320 antigen (282 aa).

A signal peptide spans 1–35; sequence MSGGWMAQVGAWRTGALGLALLLLLGLGLGLEAAA. Residues 36-229 lie on the Extracellular side of the membrane; that stretch reads SPLSTPTSAQ…GDQSGSPTAY (194 aa). The LDL-receptor class A 1 domain maps to 53–90; that stretch reads SCPPTKFQCRTSGLCVPLTWRCDRDLDCSDGSDEEECR. Disulfide bonds link Cys54–Cys67, Cys61–Cys80, and Cys74–Cys89. Ca(2+) is bound by residues Trp72, Asp75, Asp77, Asp79, Asp85, and Glu86. N-linked (GlcNAc...) asparagine glycosylation occurs at Asn126. Residues 131–168 form the LDL-receptor class A 2 domain; it reads ACLAGELRCTLSDDCIPLTWRCDGHPDCPDSSDELGCG. Intrachain disulfides connect Cys132–Cys145, Cys139–Cys158, and Cys152–Cys167. Residues Trp150, Asp153, His155, Asp157, Asp163, and Glu164 each contribute to the Ca(2+) site. Asn195 and Asn213 each carry an N-linked (GlcNAc...) asparagine glycan. Residues 199-223 are disordered; it reads MGPPVTLESVPSVGNATSSSAGDQS. Over residues 210 to 223 the composition is skewed to polar residues; it reads SVGNATSSSAGDQS. The chain crosses the membrane as a helical span at residues 230 to 250; the sequence is GVIAAAAVLSASLVTATLLLL. The Cytoplasmic segment spans residues 251–282; sequence SWLRAQERLRPLGLLVAMKESLLLSEQKTSLP.

In terms of assembly, interacts (via LDL-receptor class A domains) with TCN2. As to expression, detected in the germinal center (GC) of lymphoid follicles (at protein level). Expressed abundantly on follicular dendritic cells (FDCs).

It localises to the cell membrane. Its function is as follows. Receptor for transcobalamin saturated with cobalamin (TCbl). Plays an important role in cobalamin uptake. Plasma membrane protein that is expressed on follicular dendritic cells (FDC) and mediates interaction with germinal center B cells. Functions as costimulator to promote B cell responses to antigenic stimuli; promotes B cell differentiation and proliferation. Germinal center-B (GC-B) cells differentiate into memory B-cells and plasma cells (PC) through interaction with T-cells and follicular dendritic cells (FDC). CD320 augments the proliferation of PC precursors generated by IL-10. In Homo sapiens (Human), this protein is CD320 antigen (CD320).